A 248-amino-acid polypeptide reads, in one-letter code: Tryptophan synthase alpha chain (248 aa).

Active-site proton acceptor residues include Glu-36 and Asp-47.

It belongs to the TrpA family. As to quaternary structure, tetramer of two alpha and two beta chains.

The catalysed reaction is (1S,2R)-1-C-(indol-3-yl)glycerol 3-phosphate + L-serine = D-glyceraldehyde 3-phosphate + L-tryptophan + H2O. It functions in the pathway amino-acid biosynthesis; L-tryptophan biosynthesis; L-tryptophan from chorismate: step 5/5. The alpha subunit is responsible for the aldol cleavage of indoleglycerol phosphate to indole and glyceraldehyde 3-phosphate. The polypeptide is Tryptophan synthase alpha chain (Pyrococcus furiosus (strain ATCC 43587 / DSM 3638 / JCM 8422 / Vc1)).